We begin with the raw amino-acid sequence, 116 residues long: Large ribosomal subunit protein eL22A (116 aa).

This sequence belongs to the eukaryotic ribosomal protein eL22 family.

The polypeptide is Large ribosomal subunit protein eL22A (rpl22) (Dictyostelium discoideum (Social amoeba)).